The sequence spans 167 residues: Caltractin (167 aa).

The span at 1-18 shows a compositional bias: basic residues; the sequence is MSSARTVRKDKPRGRHHG. The disordered stretch occupies residues 1–23; sequence MSSARTVRKDKPRGRHHGLTQQK. EF-hand domains follow at residues 22 to 57, 58 to 93, 95 to 130, and 131 to 166; these read QKRQ…LGFE, MTEE…KIGE, DTKE…LGEN, and FTVK…TSYA. Ca(2+) is bound by residues aspartate 35, aspartate 37, serine 39, threonine 41, glutamate 46, aspartate 71, aspartate 73, serine 75, glutamate 82, aspartate 108, aspartate 110, asparagine 112, lysine 114, aspartate 119, aspartate 144, aspartate 146, aspartate 148, glutamate 150, and glutamate 155.

It belongs to the centrin family.

It is found in the cytoplasm. The protein resides in the cytoskeleton. Its subcellular location is the microtubule organizing center. Functionally, plays a fundamental role in microtubule-organizing center structure and function. The sequence is that of Caltractin from Atriplex nummularia (Old man saltbush).